The primary structure comprises 148 residues: SsrA-binding protein (148 aa).

Residues 123 to 148 form a disordered region; that stretch reads KLHDKRETEKKRDWEREKARIMRSAT. Positions 126–142 are enriched in basic and acidic residues; sequence DKRETEKKRDWEREKAR.

The protein belongs to the SmpB family.

The protein localises to the cytoplasm. Its function is as follows. Required for rescue of stalled ribosomes mediated by trans-translation. Binds to transfer-messenger RNA (tmRNA), required for stable association of tmRNA with ribosomes. tmRNA and SmpB together mimic tRNA shape, replacing the anticodon stem-loop with SmpB. tmRNA is encoded by the ssrA gene; the 2 termini fold to resemble tRNA(Ala) and it encodes a 'tag peptide', a short internal open reading frame. During trans-translation Ala-aminoacylated tmRNA acts like a tRNA, entering the A-site of stalled ribosomes, displacing the stalled mRNA. The ribosome then switches to translate the ORF on the tmRNA; the nascent peptide is terminated with the 'tag peptide' encoded by the tmRNA and targeted for degradation. The ribosome is freed to recommence translation, which seems to be the essential function of trans-translation. This is SsrA-binding protein from Burkholderia pseudomallei (strain 1710b).